A 187-amino-acid polypeptide reads, in one-letter code: Threonylcarbamoyl-AMP synthase (187 aa).

A YrdC-like domain is found at 4–187; the sequence is TPDLDAAVAT…DARTGQILRD (184 aa).

This sequence belongs to the SUA5 family. TsaC subfamily.

The protein localises to the cytoplasm. It catalyses the reaction L-threonine + hydrogencarbonate + ATP = L-threonylcarbamoyladenylate + diphosphate + H2O. In terms of biological role, required for the formation of a threonylcarbamoyl group on adenosine at position 37 (t(6)A37) in tRNAs that read codons beginning with adenine. Catalyzes the conversion of L-threonine, HCO(3)(-)/CO(2) and ATP to give threonylcarbamoyl-AMP (TC-AMP) as the acyladenylate intermediate, with the release of diphosphate. In Xanthomonas campestris pv. campestris (strain 8004), this protein is Threonylcarbamoyl-AMP synthase.